Consider the following 163-residue polypeptide: Phosphopantetheine adenylyltransferase (163 aa).

Threonine 10 contacts substrate. Residues 10–11 (TF) and histidine 18 each bind ATP. Residues lysine 42, leucine 74, and arginine 88 each coordinate substrate. Residues 89–91 (GLR), glutamate 99, and 124–130 (NSFISST) each bind ATP.

It belongs to the bacterial CoaD family. Homohexamer. Mg(2+) serves as cofactor.

Its subcellular location is the cytoplasm. The enzyme catalyses (R)-4'-phosphopantetheine + ATP + H(+) = 3'-dephospho-CoA + diphosphate. The protein operates within cofactor biosynthesis; coenzyme A biosynthesis; CoA from (R)-pantothenate: step 4/5. In terms of biological role, reversibly transfers an adenylyl group from ATP to 4'-phosphopantetheine, yielding dephospho-CoA (dPCoA) and pyrophosphate. This chain is Phosphopantetheine adenylyltransferase, found in Shewanella baltica (strain OS223).